The primary structure comprises 1038 residues: Dorsal-ventral patterning protein Sog (1038 aa).

The Cytoplasmic segment spans residues 1 to 53 (MANKLRKSNAIEWATATGTVPLLERSCCHSEDAALEPQASKTSHREQAPILRH). A helical; Signal-anchor for type II membrane protein transmembrane segment spans residues 54-74 (LSQLSHLLIIAGLLIVCLAGV). Topologically, residues 75–1038 (TEGRRHAPLM…QPHHQQRSSS (964 aa)) are extracellular. The VWFC 1 domain occupies 100–175 (TECQFGKVLR…LPGKCCKTCP (76 aa)). N-linked (GlcNAc...) asparagine glycosylation is found at asparagine 179 and asparagine 287. CHRD domains lie at 197–337 (NMKH…KYTA), 339–471 (QTEL…TRAS), 474–588 (IFQT…PRPV), and 592–713 (RDSA…STKV). 4 N-linked (GlcNAc...) asparagine glycosylation sites follow: asparagine 520, asparagine 666, asparagine 752, and asparagine 821. In terms of domain architecture, VWFC 2 spans 742–804 (TKCFHSGRFY…RDGECCPSCV (63 aa)). 2 VWFC domains span residues 830–899 (RGCR…KICP) and 939–1020 (GGCK…TQCR).

This sequence belongs to the chordin family. As to quaternary structure, component of a complex composed of dpp, sog and tsg. Interacts with palmitoyltransferase Hip14. Palmitoylated, probably by Hip14. Post-translationally, cleaved by metalloproteases tok and tld. Cleavage by tok during pupal development contributes to specification of the posterior crossvein in the wing. In terms of tissue distribution, abuts the dorsal dpp-expressing cells in a lateral stripe 14-16 cells wide. Later in embryogenesis it is expressed in neuroectoderm and in the endoderm spaced along the anterior-posterior axis of the developing gut.

The protein localises to the golgi apparatus membrane. The protein resides in the cell membrane. Its subcellular location is the secreted. In terms of biological role, putative negative growth factor. Antagonist of dpp, a protein involved in patterning the dorsal region and in the development of the neuroectoderm; dpp inhibition is enhanced by tsg. Required for establishment of a narrow stripe of peak levels of BMP signaling in the dorsal midline of early embryos, that will give rise to the amnioserosa. During pupal development, plays a role in specification of the posterior crossvein in the wing. Exhibits both agonist and antagonist activities towards BMP signaling during pupal wing patterning. In Drosophila melanogaster (Fruit fly), this protein is Dorsal-ventral patterning protein Sog (sog).